Consider the following 276-residue polypeptide: Probable endonuclease 4 (276 aa).

9 residues coordinate Zn(2+): His70, His108, Glu144, Asp177, His180, His211, Asp224, His226, and Glu256.

The protein belongs to the AP endonuclease 2 family. The cofactor is Zn(2+).

The catalysed reaction is Endonucleolytic cleavage to 5'-phosphooligonucleotide end-products.. Functionally, endonuclease IV plays a role in DNA repair. It cleaves phosphodiester bonds at apurinic or apyrimidinic (AP) sites, generating a 3'-hydroxyl group and a 5'-terminal sugar phosphate. This chain is Probable endonuclease 4, found in Metamycoplasma arthritidis (strain 158L3-1) (Mycoplasma arthritidis).